Reading from the N-terminus, the 274-residue chain is Large ribosomal subunit protein uL2cz/uL2cy (274 aa).

Disordered regions lie at residues 1–23 and 224–274; these read MAIH…SKVK and NPVD…RRSK.

The protein belongs to the universal ribosomal protein uL2 family. As to quaternary structure, part of the 50S ribosomal subunit.

It localises to the plastid. The protein localises to the chloroplast. In Lactuca sativa (Garden lettuce), this protein is Large ribosomal subunit protein uL2cz/uL2cy (rpl2-A).